The chain runs to 305 residues: Sulfate adenylyltransferase subunit 2 (305 aa).

This sequence belongs to the PAPS reductase family. CysD subfamily. As to quaternary structure, heterodimer composed of CysD, the smaller subunit, and CysN.

The catalysed reaction is sulfate + ATP + H(+) = adenosine 5'-phosphosulfate + diphosphate. The protein operates within sulfur metabolism; hydrogen sulfide biosynthesis; sulfite from sulfate: step 1/3. Its function is as follows. With CysN forms the ATP sulfurylase (ATPS) that catalyzes the adenylation of sulfate producing adenosine 5'-phosphosulfate (APS) and diphosphate, the first enzymatic step in sulfur assimilation pathway. APS synthesis involves the formation of a high-energy phosphoric-sulfuric acid anhydride bond driven by GTP hydrolysis by CysN coupled to ATP hydrolysis by CysD. The polypeptide is Sulfate adenylyltransferase subunit 2 (Pseudomonas aeruginosa (strain LESB58)).